The primary structure comprises 472 residues: Probable serine/threonine-protein kinase At1g01540 (472 aa).

A helical membrane pass occupies residues 24 to 44; the sequence is LWVVIGILLGSLIVIALFLLS. Phosphothreonine is present on residues T67 and T143. The Protein kinase domain maps to 154–431; the sequence is LCEENVIGEG…IHMLEAEDLL (278 aa). Residues 160-168 and K182 contribute to the ATP site; that span reads IGEGGYGIV. Residue Y227 is modified to Phosphotyrosine. D280 serves as the catalytic Proton acceptor. Phosphoserine is present on S284. Phosphothreonine is present on residues T314 and T319. Position 327 is a phosphotyrosine (Y327). Basic and acidic residues predominate over residues 437 to 449; the sequence is RTTRDHGSRERQE. A disordered region spans residues 437–472; sequence RTTRDHGSRERQETAVVAAGSESGESGSRHHQQKQR. The segment covering 451–462 has biased composition (low complexity); the sequence is AVVAAGSESGES.

This sequence belongs to the protein kinase superfamily. Ser/Thr protein kinase family.

Its subcellular location is the membrane. The enzyme catalyses L-seryl-[protein] + ATP = O-phospho-L-seryl-[protein] + ADP + H(+). It carries out the reaction L-threonyl-[protein] + ATP = O-phospho-L-threonyl-[protein] + ADP + H(+). The protein is Probable serine/threonine-protein kinase At1g01540 of Arabidopsis thaliana (Mouse-ear cress).